A 464-amino-acid chain; its full sequence is Glycosyl hydrolase family 109 protein 1 (464 aa).

Residues Met-1–Ala-16 form the signal peptide. Cys-17 carries the N-palmitoyl cysteine lipid modification. Cys-17 is lipidated: S-diacylglycerol cysteine. Residues Met-63–Arg-64, Asp-85, Trp-134–His-137, Glu-154–Val-155, and Asn-183 contribute to the NAD(+) site. Substrate is bound by residues Tyr-212, Arg-228, Tyr-240–His-243, and Tyr-318. Residue Tyr-240 coordinates NAD(+).

The protein belongs to the Gfo/Idh/MocA family. Glycosyl hydrolase 109 subfamily. It depends on NAD(+) as a cofactor.

Its subcellular location is the cell membrane. Glycosidase. Has no alpha-N-acetylgalactosaminidase activity. This chain is Glycosyl hydrolase family 109 protein 1, found in Bacteroides fragilis (strain ATCC 25285 / DSM 2151 / CCUG 4856 / JCM 11019 / LMG 10263 / NCTC 9343 / Onslow / VPI 2553 / EN-2).